Reading from the N-terminus, the 100-residue chain is Nucleoid-associated protein jhp_0031 (100 aa).

Belongs to the YbaB/EbfC family. Homodimer.

It localises to the cytoplasm. It is found in the nucleoid. In terms of biological role, binds to DNA and alters its conformation. May be involved in regulation of gene expression, nucleoid organization and DNA protection. The protein is Nucleoid-associated protein jhp_0031 of Helicobacter pylori (strain J99 / ATCC 700824) (Campylobacter pylori J99).